The following is a 207-amino-acid chain: Large ribosomal subunit protein uL4 (207 aa).

Residues 44–78 are disordered; the sequence is MRQGTHKTKNRAEVSGGGRKPWRQKGTGRARQGSI.

This sequence belongs to the universal ribosomal protein uL4 family. As to quaternary structure, part of the 50S ribosomal subunit.

In terms of biological role, one of the primary rRNA binding proteins, this protein initially binds near the 5'-end of the 23S rRNA. It is important during the early stages of 50S assembly. It makes multiple contacts with different domains of the 23S rRNA in the assembled 50S subunit and ribosome. Its function is as follows. This protein when expressed in E.coli represses the endogenous S10 operon; this may not occur in B.stearothermophilus however. Functionally, forms part of the polypeptide exit tunnel. This Geobacillus stearothermophilus (Bacillus stearothermophilus) protein is Large ribosomal subunit protein uL4 (rplD).